Consider the following 510-residue polypeptide: Cytochrome P450 52C2 (510 aa).

Cys-458 is a heme binding site.

Belongs to the cytochrome P450 family. Heme serves as cofactor.

It is found in the membrane. Together with an NADPH cytochrome P450 the enzyme system catalyzes the terminal hydroxylation as the first step in the assimilation of alkanes and fatty acids. In Candida maltosa (Yeast), this protein is Cytochrome P450 52C2 (CYP52C2).